A 55-amino-acid chain; its full sequence is Large ribosomal subunit protein bL33 (55 aa).

The span at 1–10 shows a compositional bias: basic and acidic residues; the sequence is MAKGGREKIK. The tract at residues 1 to 27 is disordered; that stretch reads MAKGGREKIKLQSTAGTGHFYTTDKNK.

This sequence belongs to the bacterial ribosomal protein bL33 family.

The protein is Large ribosomal subunit protein bL33 of Polaromonas naphthalenivorans (strain CJ2).